Here is a 347-residue protein sequence, read N- to C-terminus: Phosphoribosylformylglycinamidine cyclo-ligase (347 aa).

Belongs to the AIR synthase family.

It localises to the cytoplasm. The catalysed reaction is 2-formamido-N(1)-(5-O-phospho-beta-D-ribosyl)acetamidine + ATP = 5-amino-1-(5-phospho-beta-D-ribosyl)imidazole + ADP + phosphate + H(+). The protein operates within purine metabolism; IMP biosynthesis via de novo pathway; 5-amino-1-(5-phospho-D-ribosyl)imidazole from N(2)-formyl-N(1)-(5-phospho-D-ribosyl)glycinamide: step 2/2. This chain is Phosphoribosylformylglycinamidine cyclo-ligase, found in Hydrogenovibrio crunogenus (strain DSM 25203 / XCL-2) (Thiomicrospira crunogena).